Reading from the N-terminus, the 585-residue chain is Proline-rich protein 14 (585 aa).

Met1 bears the N-acetylmethionine mark. Residues 1-135 (MDLPGDSSPP…TLRRRSRTTP (135 aa)) form a sufficient for heterochromatin association in interphase and chromatin association in anaphase region. Disordered regions lie at residues 23 to 46 (ALWG…PLEK), 73 to 150 (TSIP…RAPQ), and 189 to 241 (IVRQ…RPRL). The required for the interaction with GRB2 and sufficient to promote the phosphorylation of AKT and cell proliferation stretch occupies residues 85–378 (PVHRQPPASP…MARAPPPPRP (294 aa)). A compositionally biased stretch (basic residues) spans 119-132 (RIHRTSSTLRRRSR). Residues 136–365 (GPEEGPSQKV…RPRPRRHTVG (230 aa)) form a required for nuclear lamina association region. Residues 193-205 (PTPPPGDLEPPFQ) show a composition bias toward pro residues. Ser277 bears the Phosphoserine mark. 2 disordered regions span residues 290-445 (EAEQ…KVSR) and 525-557 (DSSL…PDVG). Over residues 337-356 (LGPPGPGTCTWPPAPPQPSR) the composition is skewed to pro residues. Over residues 393-409 (SPSLTTSCSSTASTSFS) the composition is skewed to low complexity. Residues 518-535 (RRAVEFRDSSLPRSRRPS) are required for nuclear localization.

As to quaternary structure, interacts (via proline-rich region) with GRB2 (via SH3 domain 2). Interacts (via N-terminus) with CBX5.

Its subcellular location is the chromosome. It localises to the nucleus. It is found in the nucleus lamina. The protein resides in the nucleoplasm. Functions in tethering peripheral heterochromatin to the nuclear lamina during interphase, possibly through the interaction with heterochromatin protein CBX5/HP1 alpha. Might play a role in reattaching heterochromatin to the nuclear lamina at mitotic exit. Promotes myoblast differentiation during skeletal myogenesis, possibly by stimulating transcription factor MyoD activity via binding to CBX5/HP1 alpha. Involved in the positive regulation of the PI3K-Akt-mTOR signaling pathway and in promoting cell proliferation, possibly via binding to GRB2. The sequence is that of Proline-rich protein 14 (PRR14) from Homo sapiens (Human).